We begin with the raw amino-acid sequence, 245 residues long: Major prion protein (245 aa).

The signal sequence occupies residues 1–22 (MANLGCWMLVVFVATWSDLGLC). The interaction with GRB2, ERI3 and SYN1 stretch occupies residues 23–222 (KKRPKPGGWN…ESQAYYQRGS (200 aa)). The segment at 25–102 (RPKPGGWNTG…KPSKPKTSMK (78 aa)) is disordered. A run of 4 repeats spans residues 51–59 (PQGGGGWGQ), 60–67 (PHGGGWGQ), 68–75 (PHGGGWGQ), and 76–83 (PHGGGWGQ). The tract at residues 51–83 (PQGGGGWGQPHGGGWGQPHGGGWGQPHGGGWGQ) is 4 X 8 AA tandem repeats of P-H-G-G-G-W-G-Q. Over residues 52-87 (QGGGGWGQPHGGGWGQPHGGGWGQPHGGGWGQGGGT) the composition is skewed to gly residues. Cu(2+)-binding residues include glycine 54, glycine 55, histidine 61, glycine 62, glycine 63, histidine 69, glycine 70, glycine 71, histidine 77, glycine 78, and glycine 79. A compositionally biased stretch (basic residues) spans 90 to 101 (QWHKPSKPKTSM). Cysteine 171 and cysteine 206 are joined by a disulfide. 2 N-linked (GlcNAc...) asparagine glycosylation sites follow: asparagine 173 and asparagine 189. Serine 222 is lipidated: GPI-anchor amidated serine. Residues 223-245 (SMVLFSSPPVILLISFLIFLIVG) constitute a propeptide, removed in mature form.

The protein belongs to the prion family. As to quaternary structure, monomer and homodimer. Has a tendency to aggregate into amyloid fibrils containing a cross-beta spine, formed by a steric zipper of superposed beta-strands. Soluble oligomers may represent an intermediate stage on the path to fibril formation. Copper binding may promote oligomerization. Interacts with GRB2, APP, ERI3/PRNPIP and SYN1. Mislocalized cytosolically exposed PrP interacts with MGRN1; this interaction alters MGRN1 subcellular location and causes lysosomal enlargement. Interacts with KIAA1191.

The protein resides in the cell membrane. Its subcellular location is the golgi apparatus. Functionally, its primary physiological function is unclear. Has cytoprotective activity against internal or environmental stresses. May play a role in neuronal development and synaptic plasticity. May be required for neuronal myelin sheath maintenance. May play a role in iron uptake and iron homeostasis. Soluble oligomers are toxic to cultured neuroblastoma cells and induce apoptosis (in vitro). Association with GPC1 (via its heparan sulfate chains) targets PRNP to lipid rafts. Also provides Cu(2+) or Zn(2+) for the ascorbate-mediated GPC1 deaminase degradation of its heparan sulfate side chains. This chain is Major prion protein (PRNP), found in Cercopithecus diana (Diana monkey).